We begin with the raw amino-acid sequence, 468 residues long: 3-isopropylmalate dehydratase large subunit (468 aa).

Residues C347, C407, and C410 each coordinate [4Fe-4S] cluster.

It belongs to the aconitase/IPM isomerase family. LeuC type 1 subfamily. As to quaternary structure, heterodimer of LeuC and LeuD. It depends on [4Fe-4S] cluster as a cofactor.

The enzyme catalyses (2R,3S)-3-isopropylmalate = (2S)-2-isopropylmalate. It participates in amino-acid biosynthesis; L-leucine biosynthesis; L-leucine from 3-methyl-2-oxobutanoate: step 2/4. Catalyzes the isomerization between 2-isopropylmalate and 3-isopropylmalate, via the formation of 2-isopropylmaleate. The polypeptide is 3-isopropylmalate dehydratase large subunit (Campylobacter jejuni (strain RM1221)).